A 383-amino-acid chain; its full sequence is Succinyl-diaminopimelate desuccinylase (383 aa).

Histidine 73 is a binding site for Zn(2+). Aspartate 75 is an active-site residue. Aspartate 107 contacts Zn(2+). Glutamate 141 functions as the Proton acceptor in the catalytic mechanism. Glutamate 142, glutamate 170, and histidine 356 together coordinate Zn(2+).

Belongs to the peptidase M20A family. DapE subfamily. As to quaternary structure, homodimer. The cofactor is Zn(2+). Co(2+) serves as cofactor.

It catalyses the reaction N-succinyl-(2S,6S)-2,6-diaminopimelate + H2O = (2S,6S)-2,6-diaminopimelate + succinate. Its pathway is amino-acid biosynthesis; L-lysine biosynthesis via DAP pathway; LL-2,6-diaminopimelate from (S)-tetrahydrodipicolinate (succinylase route): step 3/3. Functionally, catalyzes the hydrolysis of N-succinyl-L,L-diaminopimelic acid (SDAP), forming succinate and LL-2,6-diaminopimelate (DAP), an intermediate involved in the bacterial biosynthesis of lysine and meso-diaminopimelic acid, an essential component of bacterial cell walls. This is Succinyl-diaminopimelate desuccinylase from Pseudomonas aeruginosa (strain ATCC 15692 / DSM 22644 / CIP 104116 / JCM 14847 / LMG 12228 / 1C / PRS 101 / PAO1).